The sequence spans 162 residues: Disulfide bond formation protein B (162 aa).

At 1–8 (MTPLFRKA) the chain is on the cytoplasmic side. A helical transmembrane segment spans residues 9–25 (VWLLFAVSVCAFAGSLA). Residues 26-43 (AQYVLGMEPCVLCISQRL) lie on the Periplasmic side of the membrane. A disulfide bridge links C35 with C38. A helical transmembrane segment spans residues 44 to 60 (CVLATALCTAIVLMCRP). Over 61 to 67 (RRRAGGL) the chain is Cytoplasmic. Residues 68-85 (FGAVFISIPAVTGISVAA) form a helical membrane-spanning segment. Residues 86 to 141 (YQLWLQSLPPGTAPSCGAPWTFRLKGWSLFDWFEPVVRGFGNCAEPDYLLGVALPV) are Periplasmic-facing. C101 and C128 are joined by a disulfide. Residues 142 to 160 (WSAAYFLAVVLTVWWAWAR) form a helical membrane-spanning segment. The Cytoplasmic segment spans residues 161–162 (AK).

The protein belongs to the DsbB family.

Its subcellular location is the cell inner membrane. Required for disulfide bond formation in some periplasmic proteins. Acts by oxidizing the DsbA protein. This chain is Disulfide bond formation protein B, found in Neisseria meningitidis serogroup C / serotype 2a (strain ATCC 700532 / DSM 15464 / FAM18).